Reading from the N-terminus, the 367-residue chain is uncharacterized protein (367 aa).

The next 4 helical transmembrane spans lie at 35–55, 61–81, 92–112, and 113–133; these read YVYD…IILW, LALF…TLLV, EVAD…TAAG, and LMFS…PLFL. 3 disordered regions span residues 177–220, 249–283, and 296–367; these read KLPK…PASI, SNIK…YYTP, and GDIS…SRPK. Residues 257–274 are compositionally biased toward polar residues; the sequence is NTKSILHTPLNRRSPSGS. Residues 302 to 312 are compositionally biased toward low complexity; sequence SSSSTSSKTST. Residues 323–342 are compositionally biased toward basic and acidic residues; it reads SRSERNARHHRNKEDHRQNQ. Over residues 357–367 the composition is skewed to basic residues; it reads PRRKKYRSRPK.

This sequence belongs to the chlamydial CPn_0443/CT_005/TC_0273 family.

The protein resides in the cell membrane. This is an uncharacterized protein from Chlamydia muridarum (strain MoPn / Nigg).